A 92-amino-acid polypeptide reads, in one-letter code: Small ribosomal subunit protein uS19 (92 aa).

It belongs to the universal ribosomal protein uS19 family.

Protein S19 forms a complex with S13 that binds strongly to the 16S ribosomal RNA. The polypeptide is Small ribosomal subunit protein uS19 (Acidovorax sp. (strain JS42)).